The sequence spans 347 residues: MFIRNCWYVAAWDTEIPAEGLFHRTLLNEPVLLYRDTQGRVVALENRCCHRSAPLHIGRQEGDCVRCLYHGLKFNPSGACVEIPGQEQIPPKTCIKSYPVVERNRLVWIWMGDPARANPDDIVDYFWHDSPEWRMKPGYIHYQANYKLIVDNLLDFTHLAWVHPTTLGTDSAASLKPVIERDTTGTGKLTITRWYLNDDMSNLHKGVAKFEGKADRWQIYQWSPPALLRMDTGSAPTGTGAPEGRRVPEAVQFRHTSIQTPETETTSHYWFCQARNFDLDDEALTEKIYQGVVVAFEEDRTMIEAHEKILSQVPDRPMVPIAADAGLNQGRWLLDRLLKAENGGTAP.

The 103-residue stretch at 7-109 (WYVAAWDTEI…VVERNRLVWI (103 aa)) folds into the Rieske domain. [2Fe-2S] cluster-binding residues include Cys48, His50, Cys67, and His70.

In terms of assembly, homotetramer. Part of the p-toluenesulfonate methyl-monooxygenase complex TsaBM, comprising the reductase TsaB and the oxygenase TsaM. Requires [2Fe-2S] cluster as cofactor.

It carries out the reaction toluene-4-sulfonate + NADH + O2 + H(+) = 4-(hydroxymethyl)benzenesulfonate + NAD(+) + H2O. Involved in the toluene-4-sulfonate degradation pathway. Does not discriminate between the sulfonate and the carboxyl substituents and can also be involved in the p-toluenecarboxylate degradation pathway. Can use toluene-4-sulfonate, p-toluate, m-toluate and 4-ethylbenzoate as substrates, but not p-xylene, toluene and p-cresol. Also catalyzes the demethylation of 4-methoxybenzoate to 4-hydroxybenzoate. This Comamonas testosteroni (Pseudomonas testosteroni) protein is Toluene-4-sulfonate monooxygenase system iron-sulfur subunit TsaM1 (tsaM1).